Reading from the N-terminus, the 374-residue chain is Relaxin-3 receptor 2 (374 aa).

Over 1–43 (MPTLNTSASPPTFFWANASGGSVLSADDAPMPVKFLALRLMVA) the chain is Extracellular. Residues N5 and N17 are each glycosylated (N-linked (GlcNAc...) asparagine). Residues 44-64 (LAYGLVGAIGLLGNLAVLWVL) traverse the membrane as a helical segment. At 65–78 (SNCARRAPGPPSDT) the chain is on the cytoplasmic side. Residues 79-99 (FVFNLALADLGLALTLPFWAA) form a helical membrane-spanning segment. The Extracellular portion of the chain corresponds to 100-116 (ESALDFHWPFGGALCKM). C114 and C191 are oxidised to a cystine. A helical membrane pass occupies residues 117-137 (VLTATVLNVYASIFLITALSV). The Cytoplasmic segment spans residues 138–154 (ARYWVVAMAAGPGTHLS). Residues 155–175 (LFWARIATLAVWAAAALVTVP) traverse the membrane as a helical segment. The Extracellular portion of the chain corresponds to 176 to 209 (TAVFGVEGEVCGVRLCLLRFPSRYWLGAYQLQRV). The helical transmembrane segment at 210–230 (VLAFMVPLGVITTSYLLLLAF) threads the bilayer. Residues 231–249 (LQRRQRRRQDSRVVARSVR) are Cytoplasmic-facing. Residues 250-270 (ILVASFFLCWFPNHVVTLWGV) traverse the membrane as a helical segment. Over 271–281 (LVKFDLVPWNS) the chain is Extracellular. Residues 282-302 (TFYTIQTYVFPVTTCLAHSNS) traverse the membrane as a helical segment. The Cytoplasmic portion of the chain corresponds to 303-374 (CLNPVLYCLL…LTNLDRGTPG (72 aa)).

The protein belongs to the G-protein coupled receptor 1 family. In terms of tissue distribution, expressed in a broader range of tissues including brain, kidney, testis, thymus, placenta, prostate, salivary gland, thyroid and colon.

Its subcellular location is the cell membrane. Functionally, high affinity receptor for INSL5. Also acts as a receptor for RLN3/relaxin-3, as well as bradykinin and kallidin. Binding of the ligand inhibit cAMP accumulation. The protein is Relaxin-3 receptor 2 (RXFP4) of Homo sapiens (Human).